The sequence spans 318 residues: Coproporphyrin III ferrochelatase (318 aa).

Residues His-186 and Glu-268 each coordinate Fe(2+).

Belongs to the ferrochelatase family.

Its subcellular location is the cytoplasm. The catalysed reaction is Fe-coproporphyrin III + 2 H(+) = coproporphyrin III + Fe(2+). Its pathway is porphyrin-containing compound metabolism; protoheme biosynthesis. Its function is as follows. Involved in coproporphyrin-dependent heme b biosynthesis. Catalyzes the insertion of ferrous iron into coproporphyrin III to form Fe-coproporphyrin III. The chain is Coproporphyrin III ferrochelatase from Lactococcus lactis subsp. cremoris (strain MG1363).